Here is a 122-residue protein sequence, read N- to C-terminus: uncharacterized protein (122 aa).

The N-terminal stretch at 1–17 (MKYSSIFSMLSFFILFA) is a signal peptide.

This is an uncharacterized protein from Escherichia coli (strain K12).